The following is a 467-amino-acid chain: Argininosuccinate lyase (467 aa).

It belongs to the lyase 1 family. Argininosuccinate lyase subfamily.

Its subcellular location is the cytoplasm. It carries out the reaction 2-(N(omega)-L-arginino)succinate = fumarate + L-arginine. Its pathway is amino-acid biosynthesis; L-arginine biosynthesis; L-arginine from L-ornithine and carbamoyl phosphate: step 3/3. The protein is Argininosuccinate lyase of Anaeromyxobacter dehalogenans (strain 2CP-C).